The sequence spans 213 residues: Na(+)-translocating NADH-quinone reductase subunit D (213 aa).

A run of 7 helical transmembrane segments spans residues 14–34, 42–62, 77–97, 101–121, 131–151, 154–174, and 183–203; these read ALWI…ALAV, LTMG…VSLL, IIIS…FFNI, LSVF…AESM, FLDG…ISII, LFGF…YASA, and LGLM…VWLV.

It belongs to the NqrDE/RnfAE family. Composed of six subunits; NqrA, NqrB, NqrC, NqrD, NqrE and NqrF.

It localises to the cell inner membrane. It carries out the reaction a ubiquinone + n Na(+)(in) + NADH + H(+) = a ubiquinol + n Na(+)(out) + NAD(+). NQR complex catalyzes the reduction of ubiquinone-1 to ubiquinol by two successive reactions, coupled with the transport of Na(+) ions from the cytoplasm to the periplasm. NqrA to NqrE are probably involved in the second step, the conversion of ubisemiquinone to ubiquinol. The polypeptide is Na(+)-translocating NADH-quinone reductase subunit D (Chlamydia muridarum (strain MoPn / Nigg)).